A 195-amino-acid polypeptide reads, in one-letter code: Imidazoleglycerol-phosphate dehydratase (195 aa).

The protein belongs to the imidazoleglycerol-phosphate dehydratase family.

The protein resides in the cytoplasm. The catalysed reaction is D-erythro-1-(imidazol-4-yl)glycerol 3-phosphate = 3-(imidazol-4-yl)-2-oxopropyl phosphate + H2O. The protein operates within amino-acid biosynthesis; L-histidine biosynthesis; L-histidine from 5-phospho-alpha-D-ribose 1-diphosphate: step 6/9. In Alkaliphilus metalliredigens (strain QYMF), this protein is Imidazoleglycerol-phosphate dehydratase.